The primary structure comprises 54 residues: UPF0391 membrane protein msr3702 (54 aa).

The next 2 helical transmembrane spans lie at tryptophan 4–alanine 24 and isoleucine 30–leucine 50.

It belongs to the UPF0391 family.

It is found in the cell membrane. This Mesorhizobium japonicum (strain LMG 29417 / CECT 9101 / MAFF 303099) (Mesorhizobium loti (strain MAFF 303099)) protein is UPF0391 membrane protein msr3702.